The chain runs to 349 residues: Isopentenyl-diphosphate delta-isomerase (349 aa).

9–10 (RK) contributes to the substrate binding site. Residues 65-67 (AMT), Ser-95, and Asn-124 each bind FMN. 95-97 (STH) is a binding site for substrate. Gln-154 is a substrate binding site. Position 155 (Glu-155) interacts with Mg(2+). FMN is bound by residues Lys-186, Ser-211, Thr-216, 262 to 264 (GLR), and 283 to 284 (SR).

The protein belongs to the IPP isomerase type 2 family. Homooctamer. Dimer of tetramers. The cofactor is FMN. It depends on NADPH as a cofactor. Requires Mg(2+) as cofactor.

The protein resides in the cytoplasm. It catalyses the reaction isopentenyl diphosphate = dimethylallyl diphosphate. Functionally, involved in the biosynthesis of isoprenoids. Catalyzes the 1,3-allylic rearrangement of the homoallylic substrate isopentenyl (IPP) to its allylic isomer, dimethylallyl diphosphate (DMAPP). The chain is Isopentenyl-diphosphate delta-isomerase from Staphylococcus aureus (strain N315).